Consider the following 141-residue polypeptide: Large ribosomal subunit protein uL16 (141 aa).

The span at 1 to 19 (MLMPKKTKYRKQQKGRNRG) shows a compositional bias: basic residues. Residues 1-22 (MLMPKKTKYRKQQKGRNRGKAY) form a disordered region.

It belongs to the universal ribosomal protein uL16 family. Part of the 50S ribosomal subunit.

In terms of biological role, binds 23S rRNA and is also seen to make contacts with the A and possibly P site tRNAs. The sequence is that of Large ribosomal subunit protein uL16 from Nitratiruptor sp. (strain SB155-2).